Here is a 900-residue protein sequence, read N- to C-terminus: Probable beta-mannosidase (900 aa).

A signal peptide spans 1–21 (MRTSLVVCLFWLLFQLHTTHG). Asn-38, Asn-42, and Asn-131 each carry an N-linked (GlcNAc...) asparagine glycan. Glu-463 acts as the Proton donor in catalysis. Asn-477, Asn-576, Asn-661, and Asn-738 each carry an N-linked (GlcNAc...) asparagine glycan.

Belongs to the glycosyl hydrolase 2 family.

The protein localises to the lysosome. The enzyme catalyses Hydrolysis of terminal, non-reducing beta-D-mannose residues in beta-D-mannosides.. The sequence is that of Probable beta-mannosidase from Caenorhabditis elegans.